A 169-amino-acid polypeptide reads, in one-letter code: Small ribosomal subunit protein uS5 (169 aa).

Residues Leu14–Val77 enclose the S5 DRBM domain.

Belongs to the universal ribosomal protein uS5 family. In terms of assembly, part of the 30S ribosomal subunit. Contacts proteins S4 and S8.

In terms of biological role, with S4 and S12 plays an important role in translational accuracy. Functionally, located at the back of the 30S subunit body where it stabilizes the conformation of the head with respect to the body. The sequence is that of Small ribosomal subunit protein uS5 from Limosilactobacillus reuteri (strain DSM 20016) (Lactobacillus reuteri).